Consider the following 276-residue polypeptide: Transmembrane protein 81 (276 aa).

An N-terminal signal peptide occupies residues 1–24 (MKTSATSFIPGSLVLAFCLPVVAT). Residues 25 to 225 (SPKTLAIPEK…QHPPWKKKVA (201 aa)) are Extracellular-facing. Asn45 carries N-linked (GlcNAc...) asparagine glycosylation. One can recognise an Ig-like domain in the interval 83 to 176 (TNWLCGMLHF…NLRLVKRLYF (94 aa)). A disulfide bridge links Cys104 with Cys160. N-linked (GlcNAc...) asparagine glycosylation is present at Asn211. Residues 226–246 (IAVGIGVAGGVTGGVLVSIVL) traverse the membrane as a helical segment. The Cytoplasmic segment spans residues 247 to 276 (CGRLSVIHSSASLETLQALLPKGGMLRKPD).

Forms a complex with IZUMO1 and SPACA6 on spermatocyte cell membrane required for fertilization.

It is found in the cell membrane. In terms of biological role, essential fertilization factor required for male fertility. Part of a conserved trimeric sperm complex with the essential fertilization factors IZUMO1 and SPACA6 which bridges sperm and oocyte membranes during fertilization by binding to IZUMO1R/JUNO on the oocyte. The protein is Transmembrane protein 81 (TMEM81) of Bos taurus (Bovine).